The sequence spans 84 residues: Carboxysome shell vertex protein CsoS4B (84 aa).

The BMV domain occupies 1–77 (MQILQVKKQL…TDLTVGGIID (77 aa)).

This sequence belongs to the CcmL/EutN family. CsoS4 subfamily. As to quaternary structure, homopentamer.

Its subcellular location is the carboxysome. Its function is as follows. Probably forms vertices in the carboxysome, a polyhedral inclusion where RuBisCO (ribulose bisphosphate carboxylase, cbbL-cbbS) is sequestered. Has been modeled to induce curvature upon insertion into an otherwise flat hexagonal layer of major carboxysome subunits. This chain is Carboxysome shell vertex protein CsoS4B, found in Hydrogenovibrio crunogenus (strain DSM 25203 / XCL-2) (Thiomicrospira crunogena).